We begin with the raw amino-acid sequence, 38 residues long: MKKFLTTAPVVAAIWFTATAGILIEWNRFFPDLLFHPM.

A helical membrane pass occupies residues 4–24 (FLTTAPVVAAIWFTATAGILI).

This sequence belongs to the PsaJ family.

It localises to the cellular thylakoid membrane. Functionally, may help in the organization of the PsaE and PsaF subunits. The polypeptide is Photosystem I reaction center subunit IX (Synechococcus sp. (strain CC9902)).